Reading from the N-terminus, the 251-residue chain is Triosephosphate isomerase (251 aa).

Residue asparagine 9–lysine 11 coordinates substrate. The active-site Electrophile is histidine 95. Glutamate 167 functions as the Proton acceptor in the catalytic mechanism. Substrate contacts are provided by residues glycine 173, serine 213, and glycine 234 to glycine 235.

It belongs to the triosephosphate isomerase family. In terms of assembly, homodimer.

The protein localises to the cytoplasm. It catalyses the reaction D-glyceraldehyde 3-phosphate = dihydroxyacetone phosphate. The protein operates within carbohydrate biosynthesis; gluconeogenesis. Its pathway is carbohydrate degradation; glycolysis; D-glyceraldehyde 3-phosphate from glycerone phosphate: step 1/1. In terms of biological role, involved in the gluconeogenesis. Catalyzes stereospecifically the conversion of dihydroxyacetone phosphate (DHAP) to D-glyceraldehyde-3-phosphate (G3P). The sequence is that of Triosephosphate isomerase from Latilactobacillus sakei subsp. sakei (strain 23K) (Lactobacillus sakei subsp. sakei).